The primary structure comprises 235 residues: Claudin-16 (235 aa).

Over 1–3 the chain is Cytoplasmic; it reads MKD. The chain crosses the membrane as a helical span at residues 4–24; that stretch reads LLQYAACFLAIFSTGFLIVAT. Residues 25–79 lie on the Extracellular side of the membrane; sequence RTDCWMVNADDSLEVSTKCRGLWWECVTNAFDGIRTCDEYDSIYAEHPLKLVVTR. The helical transmembrane segment at 80-100 threads the bilayer; it reads ALMITADILAGFGFITLLLGL. Topologically, residues 101 to 115 are cytoplasmic; sequence DCVKFLPDEPHIKVR. Residues 116 to 136 form a helical membrane-spanning segment; the sequence is LCFVAGTVLLIAGTPGIIGSV. At 137–169 the chain is on the extracellular side; that stretch reads WYAVDVYVERSSLVLHNIFLGIQYKFGWSCWLG. Residues 170–190 traverse the membrane as a helical segment; the sequence is MAGSLGCFLAGALLTCCLYLF. Residues 191–235 are Cytoplasmic-facing; the sequence is KDVGPERNYPYAMRKPYSTAGVSMAKSYKAPRTETAKMYAVDTRV. An Interaction with TJP1 motif is present at residues 233–235; that stretch reads TRV.

This sequence belongs to the claudin family. In terms of assembly, can form heteropolymeric tight junction strands with other claudins. Interacts with CLDN19. Interacts (via PDZ-binding motif TRV) with TJP1 (via PDZ domain). Cannot form tight junction strands on its own.

It localises to the cell junction. Its subcellular location is the tight junction. The protein resides in the cell membrane. The catalysed reaction is Mg(2+)(in) = Mg(2+)(out). The enzyme catalyses Ca(2+)(in) = Ca(2+)(out). It carries out the reaction Na(+)(in) = Na(+)(out). It catalyses the reaction K(+)(in) = K(+)(out). The catalysed reaction is Rb(+)(in) = Rb(+)(out). The enzyme catalyses Cs(+)(in) = Cs(+)(out). It carries out the reaction Li(+)(in) = Li(+)(out). Functionally, forms paracellular channels: coassembles with CLDN19 into tight junction strands with cation-selective channels through the strands, conveying epithelial permeability in a process known as paracellular tight junction permeability. Involved in the maintenance of ion gradients along the nephron. In the thick ascending limb (TAL) of Henle's loop, facilitates sodium paracellular permeability from the interstitial compartment to the lumen, contributing to the lumen-positive transepithelial potential that drives paracellular magnesium and calcium reabsorption. This Rattus norvegicus (Rat) protein is Claudin-16.